A 598-amino-acid chain; its full sequence is DNA polymerase alpha subunit B (598 aa).

Over residues 112–140 (SYTTPSKGSQKRAISTPETPLTKRSVSTR) the composition is skewed to polar residues. Residues 112 to 167 (SYTTPSKGSQKRAISTPETPLTKRSVSTRSPHQLLSPSSFSPSATPSQKYNSRSNR) are disordered. Ser126 is modified (phosphoserine). Thr127 and Thr130 each carry phosphothreonine. Phosphoserine occurs at positions 141, 147, 152, and 154. A compositionally biased stretch (low complexity) spans 141-158 (SPHQLLSPSSFSPSATPS).

The protein belongs to the DNA polymerase alpha subunit B family. As to quaternary structure, component of the alpha DNA polymerase complex (also known as the alpha DNA polymerase-primase complex) consisting of four subunits: the catalytic subunit POLA1, the regulatory subunit POLA2, and primase complex subunits PRIM1 and PRIM2 respectively. Within the complex, POLA1 directly interacts with PRIM2/p58. Post-translationally, phosphorylated in a cell cycle-dependent manner, in G2/M phase.

The protein resides in the nucleus. Functionally, accessory subunit of the DNA polymerase alpha complex (also known as the alpha DNA polymerase-primase complex) which plays an essential role in the initiation of DNA synthesis. During the S phase of the cell cycle, the DNA polymerase alpha complex (composed of a catalytic subunit POLA1, an accessory subunit POLA2 and two primase subunits, the catalytic subunit PRIM1 and the regulatory subunit PRIM2) is recruited to DNA at the replicative forks via direct interactions with MCM10 and WDHD1. The primase subunit of the polymerase alpha complex initiates DNA synthesis by oligomerising short RNA primers on both leading and lagging strands. These primers are initially extended by the polymerase alpha catalytic subunit and subsequently transferred to polymerase delta and polymerase epsilon for processive synthesis on the lagging and leading strand, respectively. The polypeptide is DNA polymerase alpha subunit B (POLA2) (Homo sapiens (Human)).